Reading from the N-terminus, the 768-residue chain is Protein ITPRID2 (768 aa).

Disordered regions lie at residues 1–24 (MTTEDHLLRTASQHSDSSGFAEDS), 39–78 (LQAMGSSADSCDSETTVTSLGEDLATPTAQDQPYFNESEE), and 98–124 (RKSGSQDFPQCNTIENPGTKQSTCSPG). Composition is skewed to polar residues over residues 39–57 (LQAMGSSADSCDSETTVTS) and 102–122 (SQDFPQCNTIENPGTKQSTCS). Residues Ser153, Ser177, Ser246, Ser248, Ser255, Ser268, Ser276, and Ser312 each carry the phosphoserine modification. Positions 315-338 (SVKKEEAPQSEAPRVEECHHGRTP) are disordered. The span at 316–334 (VKKEEAPQSEAPRVEECHH) shows a compositional bias: basic and acidic residues. Lys317 participates in a covalent cross-link: Glycyl lysine isopeptide (Lys-Gly) (interchain with G-Cter in SUMO2). 2 positions are modified to phosphoserine: Ser378 and Ser411. The stretch at 468-546 (QELQVMRRSL…GLEEQLRAVR (79 aa)) forms a coiled coil. Phosphoserine occurs at positions 549, 564, 569, 572, 627, and 643. Disordered regions lie at residues 605 to 647 (IPPG…VGKP) and 663 to 718 (ALTP…AAEE). The span at 610–627 (SSESVFSQATSESSSVCS) shows a compositional bias: polar residues. The residue at position 665 (Thr665) is a Phosphothreonine. Positions 667 to 677 (TAPSRTGSVQT) are enriched in polar residues. Residue Ser670 is modified to Phosphoserine. Thr677 is subject to Phosphothreonine. The span at 682–694 (ESSEEVDAAEEAP) shows a compositional bias: acidic residues.

Its subcellular location is the cytoplasm. The polypeptide is Protein ITPRID2 (Pongo abelii (Sumatran orangutan)).